A 187-amino-acid chain; its full sequence is Reactive Intermediate Deaminase A, chloroplastic (187 aa).

Residues 1-58 constitute a chloroplast transit peptide; sequence MTWSVFRSINTPTLDLSTALRSTRTPLVAAGVGCATFAGVSLFRMSSRSPPFASLSVS. Arg-165 provides a ligand contact to substrate.

Belongs to the RutC family. Expressed in leaves, petiols, petals, carpels and shoot apex.

Its subcellular location is the plastid. It localises to the chloroplast. The enzyme catalyses 2-iminobutanoate + H2O = 2-oxobutanoate + NH4(+). It catalyses the reaction 2-iminopropanoate + H2O = pyruvate + NH4(+). Its pathway is amino-acid biosynthesis; L-isoleucine biosynthesis; 2-oxobutanoate from L-threonine. In terms of biological role, hydrolyzes the Ser-derived enamine/imine product of Thr dehydratase, protecting the plastidial branched-chain aminotransferase BCAT3 (AC Q9M401) from inactivation. Involved in Ile biosynthesis. In Arabidopsis thaliana (Mouse-ear cress), this protein is Reactive Intermediate Deaminase A, chloroplastic.